Consider the following 224-residue polypeptide: tRNA (guanine-N(7)-)-methyltransferase (224 aa).

Residues glutamate 52, aspartate 77, and aspartate 126 each contribute to the S-adenosyl-L-methionine site. Residue aspartate 126 is part of the active site. Substrate contacts are provided by lysine 130 and aspartate 162.

It belongs to the class I-like SAM-binding methyltransferase superfamily. TrmB family.

The catalysed reaction is guanosine(46) in tRNA + S-adenosyl-L-methionine = N(7)-methylguanosine(46) in tRNA + S-adenosyl-L-homocysteine. The protein operates within tRNA modification; N(7)-methylguanine-tRNA biosynthesis. Catalyzes the formation of N(7)-methylguanine at position 46 (m7G46) in tRNA. In Christiangramia forsetii (strain DSM 17595 / CGMCC 1.15422 / KT0803) (Gramella forsetii), this protein is tRNA (guanine-N(7)-)-methyltransferase.